Reading from the N-terminus, the 271-residue chain is uncharacterized protein (271 aa).

The DOD-type homing endonuclease domain occupies 77 to 205 (IIGVYFGDAN…SKELLKKLDV (129 aa)).

This is an uncharacterized protein from Methanocaldococcus jannaschii (strain ATCC 43067 / DSM 2661 / JAL-1 / JCM 10045 / NBRC 100440) (Methanococcus jannaschii).